We begin with the raw amino-acid sequence, 292 residues long: Probable endonuclease LCL3 (292 aa).

Residues 41–58 (YFSVAAFAAGSLSLAASY) traverse the membrane as a helical segment. Residues 83-247 (RWIKGRVTSV…KDARRGIWAK (165 aa)) form the TNase-like domain. Residue arginine 132 is part of the active site. Aspartate 137 contacts Ca(2+). Active-site residues include glutamate 140 and arginine 180. The tract at residues 256-282 (EYKRRYAQAADGGEPPSKARAEKEQKR) is disordered. Over residues 272 to 282 (SKARAEKEQKR) the composition is skewed to basic and acidic residues.

The protein belongs to the LCL3 family.

The protein resides in the mitochondrion. Its subcellular location is the membrane. This chain is Probable endonuclease LCL3 (LCL3), found in Schizophyllum commune (strain H4-8 / FGSC 9210) (Split gill fungus).